Consider the following 245-residue polypeptide: Phycocyanobilin:ferredoxin oxidoreductase (245 aa).

The protein belongs to the HY2 family.

It carries out the reaction (2R,3Z)-phycocyanobilin + 4 oxidized [2Fe-2S]-[ferredoxin] = biliverdin IXalpha + 4 reduced [2Fe-2S]-[ferredoxin] + 4 H(+). In terms of biological role, catalyzes the four-electron reduction of biliverdin IX-alpha (2-electron reduction at both the A and D rings); the reaction proceeds via an isolatable 2-electron intermediate, 181,182-dihydrobiliverdin. The protein is Phycocyanobilin:ferredoxin oxidoreductase of Microcystis aeruginosa (strain NIES-843 / IAM M-2473).